A 222-amino-acid chain; its full sequence is Interleukin-12 subunit alpha (222 aa).

The first 25 residues, 1-25 (MCPLRSLFLMATLVFLNHLDHLSLA), serve as a signal peptide directing secretion. Cystine bridges form between C40–C113, C67–C199, and C88–C126. Residues N96 and N174 are each glycosylated (N-linked (GlcNAc...) asparagine).

Belongs to the IL-6 superfamily. As to quaternary structure, heterodimer with IL12B; disulfide-linked. This heterodimer is known as interleukin IL-12. Heterodimer with EBI3/IL27B; not disulfide-linked. This heterodimer is known as interleukin IL-35. Interacts with NBR1; this interaction promotes IL-12 secretion.

The protein resides in the secreted. In terms of biological role, heterodimerizes with IL12B to form the IL-12 cytokine or with EBI3/IL27B to form the IL-35 cytokine. IL-12 is primarily produced by professional antigen-presenting cells (APCs) such as B-cells and dendritic cells (DCs) as well as macrophages and granulocytes and regulates T-cell and natural killer-cell responses, induces the production of interferon-gamma (IFN-gamma), favors the differentiation of T-helper 1 (Th1) cells and is an important link between innate resistance and adaptive immunity. Mechanistically, exerts its biological effects through a receptor composed of IL12R1 and IL12R2 subunits. Binding to the receptor results in the rapid tyrosine phosphorylation of a number of cellular substrates including the JAK family kinases TYK2 and JAK2. In turn, recruited STAT4 gets phosphorylated and translocates to the nucleus where it regulates cytokine/growth factor responsive genes. As part of IL-35, plays essential roles in maintaining the immune homeostasis of the liver microenvironment and also functions as an immune-suppressive cytokine. Mediates biological events through unconventional receptors composed of IL12RB2 and gp130/IL6ST heterodimers or homodimers. Signaling requires the transcription factors STAT1 and STAT4, which form a unique heterodimer that binds to distinct DNA sites. The chain is Interleukin-12 subunit alpha (IL12A) from Lama glama (Llama).